Consider the following 741-residue polypeptide: Photosystem I P700 chlorophyll a apoprotein A2 1 (741 aa).

The next 8 membrane-spanning stretches (helical) occupy residues 46–69 (IFAT…FHVA), 135–158 (LYTG…LHLQ), 175–199 (LNHH…HVAI), 273–291 (IAHH…GHMY), 334–357 (LHFQ…QHMY), 373–399 (AALY…IFLV), 421–443 (AIIS…LYVH), and 524–542 (FLVH…LILV). Residues C566 and C575 each contribute to the [4Fe-4S] cluster site. The next 2 helical transmembrane spans lie at 582–603 (SFYL…YWHW) and 650–672 (LSVW…MFLI). 3 residues coordinate chlorophyll a: H661, M669, and Y677. Phylloquinone is bound at residue W678. A helical transmembrane segment spans residues 714–734 (VVGLAHFTVGYVLTYAAFLIA).

The protein belongs to the PsaA/PsaB family. The PsaA/B heterodimer binds the P700 chlorophyll special pair and subsequent electron acceptors. PSI consists of a core antenna complex that captures photons, and an electron transfer chain that converts photonic excitation into a charge separation. The cyanobacterial PSI reaction center is composed of one copy each of PsaA,B,C,D,E,F,I,J,K,L,M and X, and forms trimeric complexes. PSI electron transfer chain: 5 chlorophyll a, 1 chlorophyll a', 2 phylloquinones and 3 4Fe-4S clusters. PSI core antenna: 90 chlorophyll a, 22 carotenoids, 3 phospholipids and 1 galactolipid. P700 is a chlorophyll a/chlorophyll a' dimer, A0 is one or more chlorophyll a, A1 is one or both phylloquinones and FX is a shared 4Fe-4S iron-sulfur center. is required as a cofactor.

It is found in the cellular thylakoid membrane. The catalysed reaction is reduced [plastocyanin] + hnu + oxidized [2Fe-2S]-[ferredoxin] = oxidized [plastocyanin] + reduced [2Fe-2S]-[ferredoxin]. Its function is as follows. PsaA and PsaB bind P700, the primary electron donor of photosystem I (PSI), as well as the electron acceptors A0, A1 and FX. PSI is a plastocyanin/cytochrome c6-ferredoxin oxidoreductase, converting photonic excitation into a charge separation, which transfers an electron from the donor P700 chlorophyll pair to the spectroscopically characterized acceptors A0, A1, FX, FA and FB in turn. Oxidized P700 is reduced on the lumenal side of the thylakoid membrane by plastocyanin or cytochrome c6. The chain is Photosystem I P700 chlorophyll a apoprotein A2 1 from Trichormus variabilis (strain ATCC 29413 / PCC 7937) (Anabaena variabilis).